Here is a 337-residue protein sequence, read N- to C-terminus: tRNA N6-adenosine threonylcarbamoyltransferase (337 aa).

Positions 111 and 115 each coordinate Fe cation. Substrate contacts are provided by residues 134–138 (LVSGG), Asp167, Gly180, and Asn272. Residue Asp300 coordinates Fe cation.

The protein belongs to the KAE1 / TsaD family. Requires Fe(2+) as cofactor.

Its subcellular location is the cytoplasm. The enzyme catalyses L-threonylcarbamoyladenylate + adenosine(37) in tRNA = N(6)-L-threonylcarbamoyladenosine(37) in tRNA + AMP + H(+). Its function is as follows. Required for the formation of a threonylcarbamoyl group on adenosine at position 37 (t(6)A37) in tRNAs that read codons beginning with adenine. Is involved in the transfer of the threonylcarbamoyl moiety of threonylcarbamoyl-AMP (TC-AMP) to the N6 group of A37, together with TsaE and TsaB. TsaD likely plays a direct catalytic role in this reaction. The polypeptide is tRNA N6-adenosine threonylcarbamoyltransferase (Pseudoalteromonas translucida (strain TAC 125)).